The chain runs to 251 residues: tRNA (guanine-N(7)-)-methyltransferase (251 aa).

A disordered region spans residues 1–43 (MQPNEQPGTGPADTTLEQQDTAAAEVGHPRRIRSFVRRAGRTS). The segment covering 29-40 (PRRIRSFVRRAG) has biased composition (basic residues). S-adenosyl-L-methionine contacts are provided by E82, E107, D134, and D157. D157 is an active-site residue. A substrate-binding site is contributed by K161. The interval 163-168 (RHNKRR) is interaction with RNA. Residues D193 and 228 to 231 (TKFE) each bind substrate.

It belongs to the class I-like SAM-binding methyltransferase superfamily. TrmB family.

The catalysed reaction is guanosine(46) in tRNA + S-adenosyl-L-methionine = N(7)-methylguanosine(46) in tRNA + S-adenosyl-L-homocysteine. The protein operates within tRNA modification; N(7)-methylguanine-tRNA biosynthesis. Its function is as follows. Catalyzes the formation of N(7)-methylguanine at position 46 (m7G46) in tRNA. This chain is tRNA (guanine-N(7)-)-methyltransferase, found in Ralstonia nicotianae (strain ATCC BAA-1114 / GMI1000) (Ralstonia solanacearum).